The sequence spans 569 residues: Proline--tRNA ligase (569 aa).

This sequence belongs to the class-II aminoacyl-tRNA synthetase family. ProS type 1 subfamily. As to quaternary structure, homodimer.

The protein localises to the cytoplasm. It catalyses the reaction tRNA(Pro) + L-proline + ATP = L-prolyl-tRNA(Pro) + AMP + diphosphate. Functionally, catalyzes the attachment of proline to tRNA(Pro) in a two-step reaction: proline is first activated by ATP to form Pro-AMP and then transferred to the acceptor end of tRNA(Pro). As ProRS can inadvertently accommodate and process non-cognate amino acids such as alanine and cysteine, to avoid such errors it has two additional distinct editing activities against alanine. One activity is designated as 'pretransfer' editing and involves the tRNA(Pro)-independent hydrolysis of activated Ala-AMP. The other activity is designated 'posttransfer' editing and involves deacylation of mischarged Ala-tRNA(Pro). The misacylated Cys-tRNA(Pro) is not edited by ProRS. The sequence is that of Proline--tRNA ligase from Campylobacter jejuni subsp. jejuni serotype O:2 (strain ATCC 700819 / NCTC 11168).